The primary structure comprises 612 residues: RNA polymerase sigma factor RpoD (612 aa).

Over residues 191 to 206 (QQNNEEDEENNQEDHE) the composition is skewed to acidic residues. The interval 191-210 (QQNNEEDEENNQEDHEDDHS) is disordered. Residues 378–448 (MVEANLRLVI…TRSIADQART (71 aa)) are sigma-70 factor domain-2. Positions 402–405 (DLIQ) match the Interaction with polymerase core subunit RpoC motif. The interval 457–533 (ETINKLNRIS…DTTLELPLDS (77 aa)) is sigma-70 factor domain-3. A sigma-70 factor domain-4 region spans residues 546-599 (VLSGLTAREAKVLRMRFGIDMNTDHTLEEVGKQFDVTRERIRQIEAKALRKLRH). Residues 572 to 591 (LEEVGKQFDVTRERIRQIEA) constitute a DNA-binding region (H-T-H motif).

It belongs to the sigma-70 factor family. RpoD/SigA subfamily. Interacts transiently with the RNA polymerase catalytic core.

It localises to the cytoplasm. Functionally, sigma factors are initiation factors that promote the attachment of RNA polymerase to specific initiation sites and are then released. This sigma factor is the primary sigma factor during exponential growth. This chain is RNA polymerase sigma factor RpoD, found in Buchnera aphidicola subsp. Acyrthosiphon pisum (strain APS) (Acyrthosiphon pisum symbiotic bacterium).